The following is a 35-amino-acid chain: Putative gastric cancer-related gene 224 protein (35 aa).

As to expression, expressed in gastric mucosa.

This is Putative gastric cancer-related gene 224 protein (GCRG224) from Homo sapiens (Human).